Consider the following 373-residue polypeptide: NAD(P)H-quinone oxidoreductase subunit 1 (373 aa).

The next 9 membrane-spanning stretches (helical) occupy residues 29-49 (LWVP…VMVM), 64-84 (IGPN…GIKL), 98-118 (VLFT…YLVV), 129-149 (IAIG…GLLM), 177-197 (LALS…VGIV), 202-222 (GLGI…IFLI), 267-287 (LLAS…VVPV), 309-329 (VLGI…AILL), and 348-368 (FLLP…LAFP).

The protein belongs to the complex I subunit 1 family. NDH-1 is composed of at least 11 different subunits.

The protein resides in the cellular thylakoid membrane. The catalysed reaction is a plastoquinone + NADH + (n+1) H(+)(in) = a plastoquinol + NAD(+) + n H(+)(out). It carries out the reaction a plastoquinone + NADPH + (n+1) H(+)(in) = a plastoquinol + NADP(+) + n H(+)(out). Its function is as follows. NDH-1 shuttles electrons from an unknown electron donor, via FMN and iron-sulfur (Fe-S) centers, to quinones in the respiratory and/or the photosynthetic chain. The immediate electron acceptor for the enzyme in this species is believed to be plastoquinone. Couples the redox reaction to proton translocation, and thus conserves the redox energy in a proton gradient. The chain is NAD(P)H-quinone oxidoreductase subunit 1 from Synechococcus sp. (strain JA-3-3Ab) (Cyanobacteria bacterium Yellowstone A-Prime).